We begin with the raw amino-acid sequence, 161 residues long: Protein-export protein SecB (161 aa).

This sequence belongs to the SecB family. As to quaternary structure, homotetramer, a dimer of dimers. One homotetramer interacts with 1 SecA dimer.

Its subcellular location is the cytoplasm. One of the proteins required for the normal export of preproteins out of the cell cytoplasm. It is a molecular chaperone that binds to a subset of precursor proteins, maintaining them in a translocation-competent state. It also specifically binds to its receptor SecA. This is Protein-export protein SecB from Rhodopseudomonas palustris (strain BisA53).